Here is a 115-residue protein sequence, read N- to C-terminus: Large ribosomal subunit protein bL19 (115 aa).

The protein belongs to the bacterial ribosomal protein bL19 family.

Functionally, this protein is located at the 30S-50S ribosomal subunit interface and may play a role in the structure and function of the aminoacyl-tRNA binding site. The polypeptide is Large ribosomal subunit protein bL19 (Baumannia cicadellinicola subsp. Homalodisca coagulata).